Reading from the N-terminus, the 274-residue chain is Thiamine kinase (274 aa).

Belongs to the thiamine kinase family.

The catalysed reaction is thiamine + ATP = thiamine phosphate + ADP + H(+). It functions in the pathway cofactor biosynthesis; thiamine diphosphate biosynthesis; thiamine phosphate from thiamine: step 1/1. Functionally, catalyzes the ATP-dependent phosphorylation of thiamine to thiamine phosphate. Is involved in thiamine salvage. The polypeptide is Thiamine kinase (Salmonella dublin (strain CT_02021853)).